A 318-amino-acid polypeptide reads, in one-letter code: L-malyl-CoA/beta-methylmalyl-CoA lyase (318 aa).

Substrate is bound by residues F19, R24, K30, and R76. 2 residues coordinate Mg(2+): E141 and D168. Residues A167 to D168 and I251 to H252 contribute to the substrate site.

It belongs to the HpcH/HpaI aldolase family. In terms of assembly, homohexamer. Dimer of trimers. Mg(2+) is required as a cofactor. Requires Mn(2+) as cofactor.

It carries out the reaction (S)-malyl-CoA = glyoxylate + acetyl-CoA. The enzyme catalyses (2R,3S)-beta-methylmalyl-CoA = propanoyl-CoA + glyoxylate. Its function is as follows. Involved in the ethylmalonyl-CoA pathway for acetate assimilation. Catalyzes the reversible condensation of glyoxylate and acetyl-CoA to L-malyl-CoA and the reversible condensation of glyoxylate and propionyl-CoA to yield beta-methylmalyl-CoA. The sequence is that of L-malyl-CoA/beta-methylmalyl-CoA lyase from Cereibacter sphaeroides (strain ATCC 17029 / ATH 2.4.9) (Rhodobacter sphaeroides).